A 411-amino-acid polypeptide reads, in one-letter code: ACT domain-containing protein ACR9 (411 aa).

ACT domains follow at residues 22–105, 111–194, and 243–322; these read VVTV…NVSK, LLKF…LAGP, and LLQI…VIIV.

In terms of biological role, may bind amino acids. The protein is ACT domain-containing protein ACR9 of Arabidopsis thaliana (Mouse-ear cress).